The chain runs to 495 residues: UPF0371 protein cgR_2887 (495 aa).

It belongs to the UPF0371 family.

The sequence is that of UPF0371 protein cgR_2887 from Corynebacterium glutamicum (strain R).